Consider the following 279-residue polypeptide: Thymidylate synthase (279 aa).

Residue 133 to 134 (RR) coordinates dUMP. Cysteine 154 functions as the Nucleophile in the catalytic mechanism. DUMP contacts are provided by residues 178–181 (RSND), asparagine 189, and 219–221 (HIY). Aspartate 181 contacts (6R)-5,10-methylene-5,6,7,8-tetrahydrofolate. Alanine 278 is a (6R)-5,10-methylene-5,6,7,8-tetrahydrofolate binding site.

This sequence belongs to the thymidylate synthase family. Bacterial-type ThyA subfamily. Homodimer.

It localises to the cytoplasm. The catalysed reaction is dUMP + (6R)-5,10-methylene-5,6,7,8-tetrahydrofolate = 7,8-dihydrofolate + dTMP. Its pathway is pyrimidine metabolism; dTTP biosynthesis. Functionally, catalyzes the reductive methylation of 2'-deoxyuridine-5'-monophosphate (dUMP) to 2'-deoxythymidine-5'-monophosphate (dTMP) while utilizing 5,10-methylenetetrahydrofolate (mTHF) as the methyl donor and reductant in the reaction, yielding dihydrofolate (DHF) as a by-product. This enzymatic reaction provides an intracellular de novo source of dTMP, an essential precursor for DNA biosynthesis. This chain is Thymidylate synthase, found in Streptococcus pyogenes serotype M12 (strain MGAS2096).